The following is a 384-amino-acid chain: ATP synthase subunit a (384 aa).

The segment at Pro-22–Ala-60 is disordered. Helical transmembrane passes span Lys-131–Val-151, Phe-189–Ile-209, Asn-218–Ile-238, Leu-258–Phe-278, Phe-293–Gly-313, and Leu-319–Leu-339. The disordered stretch occupies residues His-355–Gly-384.

Belongs to the ATPase A chain family. As to quaternary structure, F-type ATPases have 2 components, CF(1) - the catalytic core - and CF(0) - the membrane proton channel. CF(1) has five subunits: alpha(3), beta(3), gamma(1), delta(1), epsilon(1). CF(0) has three main subunits: a(1), b(2) and c(9-12). The alpha and beta chains form an alternating ring which encloses part of the gamma chain. CF(1) is attached to CF(0) by a central stalk formed by the gamma and epsilon chains, while a peripheral stalk is formed by the delta and b chains.

Its subcellular location is the cell inner membrane. In terms of biological role, key component of the proton channel; it plays a direct role in the translocation of protons across the membrane. In Anaeromyxobacter dehalogenans (strain 2CP-1 / ATCC BAA-258), this protein is ATP synthase subunit a.